We begin with the raw amino-acid sequence, 287 residues long: Inorganic pyrophosphatase (287 aa).

Arginine 79 provides a ligand contact to diphosphate. Residues aspartate 116, aspartate 121, and aspartate 153 each coordinate Mg(2+). A compositionally biased stretch (polar residues) spans asparagine 244–leucine 258. Residues asparagine 244–proline 269 are disordered.

It belongs to the PPase family. Requires Mg(2+) as cofactor.

The protein resides in the cytoplasm. The enzyme catalyses diphosphate + H2O = 2 phosphate + H(+). Involved in osmoadaptation. In Emericella nidulans (strain FGSC A4 / ATCC 38163 / CBS 112.46 / NRRL 194 / M139) (Aspergillus nidulans), this protein is Inorganic pyrophosphatase (ipp1).